The sequence spans 184 residues: NADH-quinone oxidoreductase subunit B (184 aa).

[4Fe-4S] cluster contacts are provided by cysteine 63, cysteine 64, cysteine 128, and cysteine 158.

Belongs to the complex I 20 kDa subunit family. In terms of assembly, NDH-1 is composed of 14 different subunits. Subunits NuoB, C, D, E, F, and G constitute the peripheral sector of the complex. [4Fe-4S] cluster serves as cofactor.

It is found in the cell inner membrane. The enzyme catalyses a quinone + NADH + 5 H(+)(in) = a quinol + NAD(+) + 4 H(+)(out). NDH-1 shuttles electrons from NADH, via FMN and iron-sulfur (Fe-S) centers, to quinones in the respiratory chain. The immediate electron acceptor for the enzyme in this species is believed to be ubiquinone. Couples the redox reaction to proton translocation (for every two electrons transferred, four hydrogen ions are translocated across the cytoplasmic membrane), and thus conserves the redox energy in a proton gradient. This is NADH-quinone oxidoreductase subunit B from Xylella fastidiosa (strain M23).